A 134-amino-acid polypeptide reads, in one-letter code: Transcription antitermination protein NusB (134 aa).

The protein belongs to the NusB family.

Functionally, involved in transcription antitermination. Required for transcription of ribosomal RNA (rRNA) genes. Binds specifically to the boxA antiterminator sequence of the ribosomal RNA (rrn) operons. The polypeptide is Transcription antitermination protein NusB (Shewanella sediminis (strain HAW-EB3)).